A 133-amino-acid polypeptide reads, in one-letter code: Heat shock protein 15 (133 aa).

The region spanning 9–71 is the S4 RNA-binding domain; sequence VRLDKWLWAA…DERTVIVKAI (63 aa). Residues 105-133 are disordered; sequence NALTMPHPDRRPDKKERRDLLRFKHGDSE. Residues 111–133 are compositionally biased toward basic and acidic residues; the sequence is HPDRRPDKKERRDLLRFKHGDSE.

This sequence belongs to the HSP15 family. Monomer.

Functionally, involved in the recycling of free 50S ribosomal subunits that still carry a nascent chain. Binds RNA more specifically than DNA. Binds with very high affinity to the free 50S ribosomal subunit. Does not bind it when it is part of the 70S ribosome. This chain is Heat shock protein 15 (hslR), found in Escherichia coli O157:H7.